The sequence spans 1094 residues: MDRFELLGPLPREGTTTVLEASAGTGKTFALAGLVTRYLAETAATLDEMLLITFNRAASRELRERVRGQIVEAVGALQGDAPPSGELVEHLLRGSDAERAQKRSRLRDALANFDAATIATTHEFCGSVLKSLGVAGDNAADVELKESLTDLVTEIVDDRYLANFGRQETDPELTYAEALALALAVVDDPCAQLRPPDPEPGSKAAVRLRFAAEVLEELERRKGRLRAQGFNDLLIRLATALEAADSPARDRMRERWRIVLVDEFQDTDPMQWRVLERAFSRHSALILIGDPKQAIYGFRGGDIHTYLKAAGTADARYTLGVNWRSDRALVESLQTVLRDATLGHADIVVRGTDAHHAGHRLASAPRPAPFRLRVVKRHTLGYDGTAHVPIEALRRHIPDDLAADVAALLASGATFAGRPVVAADIAVIVEHHKDARACRNALAEAGIPAIYTGDTDVFASQAAKDWLCLLEAFDAPQRSGLVRAAACTMFFGETAESLAAEGDALTDRVAGTLREWADHARHRGVAAVFQAAQLAGMGRRVLSQRGGERDLTDLAHIAQLLHEAAHRERLGLPGLRDWLRRQAKAGAGPPEHNRRLDSDAAAVQIMTVFVAKGLQFPIVYLPFAFNRNVRSDDILLYHDDGTRCLYIGGKDGGAQRRTVEGLNRVEAAHDNLRLTYVALTRAQSQVVAWWAPTFDEVNGGLSRLLRGRRPGQSQVPDRCTPRVTDEQAWAVFAQWEAAGGPSVEESVIGARSSLEKPVPVPGFEVRHFHRRIDTTWRRTSYSDLVRGSEAVTVTSEPAAGGRADEVEIAVVAAPGSGADLTSPLAALPSGASFGSLVHAVLETADPAAPDLAAELEAQVRRHAPWWTVDVDHAQLAPELARALLPMHDTPLGPAAAALTLRQIGVRDRLRELDFEMPLAGGDLRGRSPDVSLADVGELLASHLPGDDPLSPYADRLGSAGLGDQPLRGYLAGSIDVVLRLPGQRYLVVDYKTNHLGDTAADYGFERLTEAMLHSDYPLQALLYVVVLHRFLRWRQRDYAPARHLGGVLYLFVRGMCGAATPVTAGHPAGVFTWNPPTALVVALSDLLDRGRLQS.

Residues 1–326 enclose the UvrD-like helicase ATP-binding domain; the sequence is MDRFELLGPL…YTLGVNWRSD (326 aa). A DNA-binding and helicase activity, interacts with RecC region spans residues 1-713; sequence MDRFELLGPL…LLRGRRPGQS (713 aa). Position 21 to 28 (21 to 28) interacts with ATP; that stretch reads ASAGTGKT. The region spanning 357 to 613 is the UvrD-like helicase C-terminal domain; sequence AGHRLASAPR…QIMTVFVAKG (257 aa). Residues 775 to 1094 form a nuclease activity, interacts with RecD and RecA region; the sequence is TWRRTSYSDL…DLLDRGRLQS (320 aa). Mg(2+) contacts are provided by His-838, Asp-975, and Asp-989. Asp-989 acts as the For nuclease activity in catalysis.

This sequence belongs to the helicase family. UvrD subfamily. Heterotrimer of RecB, RecC and RecD. All subunits contribute to DNA-binding. Interacts with RecA. Mg(2+) serves as cofactor.

The catalysed reaction is Exonucleolytic cleavage (in the presence of ATP) in either 5'- to 3'- or 3'- to 5'-direction to yield 5'-phosphooligonucleotides.. It carries out the reaction Couples ATP hydrolysis with the unwinding of duplex DNA by translocating in the 3'-5' direction.. It catalyses the reaction ATP + H2O = ADP + phosphate + H(+). Its function is as follows. A helicase/nuclease that prepares dsDNA breaks (DSB) for recombinational DNA repair. Binds to DSBs and unwinds DNA via a highly rapid and processive ATP-dependent bidirectional helicase activity. In the holoenzyme this subunit contributes ATPase, 3'-5' helicase, exonuclease activity and loads RecA onto ssDNA. Unlike the case in E.coli, suppresses RecA-dependent homologous recombination, is instead required for single-strand annealing pathway repair of DSB. This Mycobacterium tuberculosis (strain CDC 1551 / Oshkosh) protein is RecBCD enzyme subunit RecB.